The chain runs to 251 residues: Octanoyltransferase (251 aa).

The BPL/LPL catalytic domain occupies 56–237 (ADTGDEIWVV…RLIANLDGES (182 aa)). Substrate is bound by residues 96-103 (RGGQITYH), 168-170 (ALG), and 181-183 (GLS). Cysteine 199 serves as the catalytic Acyl-thioester intermediate.

Belongs to the LipB family.

The protein localises to the cytoplasm. The catalysed reaction is octanoyl-[ACP] + L-lysyl-[protein] = N(6)-octanoyl-L-lysyl-[protein] + holo-[ACP] + H(+). Its pathway is protein modification; protein lipoylation via endogenous pathway; protein N(6)-(lipoyl)lysine from octanoyl-[acyl-carrier-protein]: step 1/2. In terms of biological role, catalyzes the transfer of endogenously produced octanoic acid from octanoyl-acyl-carrier-protein onto the lipoyl domains of lipoate-dependent enzymes. Lipoyl-ACP can also act as a substrate although octanoyl-ACP is likely to be the physiological substrate. The sequence is that of Octanoyltransferase from Burkholderia ambifaria (strain MC40-6).